The following is a 148-amino-acid chain: Protein GLUTAMINE DUMPER 3 (148 aa).

The tract at residues 1 to 24 is disordered; that stretch reads MEGRQYYPPRENVEGNRTTMGGGP. Topologically, residues 1–34 are extracellular; it reads MEGRQYYPPRENVEGNRTTMGGGPHSPWHSPVPY. Residues 35 to 55 traverse the membrane as a helical segment; sequence LFGGLAAMLGLIAFALLILAC. Over 56–148 the chain is Cytoplasmic; sequence SYWRLSGYLD…RSSESNGETH (93 aa). Residues 99 to 103 carry the VIMAG motif; that stretch reads VIMAG. The segment covering 120–132 has biased composition (acidic residues); the sequence is CDDDDDEDDDVEG. The tract at residues 120–148 is disordered; the sequence is CDDDDDEDDDVEGSDQVVPRSSESNGETH. The segment covering 138 to 148 has biased composition (polar residues); the sequence is PRSSESNGETH.

The protein belongs to the GLUTAMINE DUMPER 1 (TC 9.B.60) family. As to expression, expressed in the vascular tissues. Also detected in anthers.

It localises to the membrane. Probable subunit of an amino acid transporter involved in the regulation of the amino acid metabolism. Stimulates amino acid export by activating nonselective amino acid facilitators. Acts upstream genes involved in the salicylic acid (SA) pathway and in the geminivirus-host interaction. The chain is Protein GLUTAMINE DUMPER 3 (GDU3) from Arabidopsis thaliana (Mouse-ear cress).